The chain runs to 326 residues: Biotin synthase (326 aa).

The region spanning N42–A266 is the Radical SAM core domain. Positions 57, 61, and 64 each coordinate [4Fe-4S] cluster. [2Fe-2S] cluster contacts are provided by C101, C132, C192, and R264.

Belongs to the radical SAM superfamily. Biotin synthase family. As to quaternary structure, homodimer. [4Fe-4S] cluster is required as a cofactor. [2Fe-2S] cluster serves as cofactor.

It catalyses the reaction (4R,5S)-dethiobiotin + (sulfur carrier)-SH + 2 reduced [2Fe-2S]-[ferredoxin] + 2 S-adenosyl-L-methionine = (sulfur carrier)-H + biotin + 2 5'-deoxyadenosine + 2 L-methionine + 2 oxidized [2Fe-2S]-[ferredoxin]. Its pathway is cofactor biosynthesis; biotin biosynthesis; biotin from 7,8-diaminononanoate: step 2/2. Functionally, catalyzes the conversion of dethiobiotin (DTB) to biotin by the insertion of a sulfur atom into dethiobiotin via a radical-based mechanism. The chain is Biotin synthase from Ehrlichia chaffeensis (strain ATCC CRL-10679 / Arkansas).